The following is a 315-amino-acid chain: Eukaryotic translation initiation factor 2 subunit 1 (315 aa).

The 72-residue stretch at 17-88 (EDVVMVNVRS…EKGYIDLSKR (72 aa)) folds into the S1 motif domain. Ser-49 carries the post-translational modification Phosphoserine; by HRI. Ser-52 carries the post-translational modification Phosphoserine. The residue at position 141 (Lys-141) is an N6-acetyllysine. Position 158 is a phosphoserine (Ser-158). Residues Thr-279 and Thr-281 each carry the phosphothreonine modification. Positions 292-315 (RLERENAEVDGDDDAEEMEAKAED) are disordered. Residues 299-308 (EVDGDDDAEE) are compositionally biased toward acidic residues.

Belongs to the eIF-2-alpha family. As to quaternary structure, eukaryotic translation initiation factor 2 eIF2 is a heterotrimeric complex composed of an alpha (EIF2S1), a beta (EIF2S2) and a gamma (EIF2S3) chain. eIF2 is member of the 43S pre-initiation complex (43S PIC). eIF2 forms a complex with at least CELF1/CUGBP1, CALR, CALR3, EIF2S1, EIF2S2, HSP90B1 and HSPA5. Interaction with METAP2 protects EIF2S1 from inhibitory phosphorylation. Interacts with ABCF1. Associates with ribosomes. Interacts with DDX3X in an RNA-independent manner. In terms of processing, phosphorylation at Ser-49 and Ser-52 stabilizes the eIF-2/GDP/eIF2B complex and prevents GDP/GTP exchange reaction, thus impairing the recycling of eIF-2 between successive rounds of initiation and leading to global inhibition of translation, while concomitantly initiating the preferential translation of integrated stress response (ISR)-specific mRNAs. Substrate for at least 4 kinases: EIF2AK1/HRI, EIF2AK2/PKR, EIF2AK3/PERK and EIF2AK4/GCN2. Phosphorylation at Ser-52 by the EIF2AK3/PERK protein kinase occurs in response to the unfolded protein response. Phosphorylation on Ser-52 by the EIF2AK4/GCN2 protein kinase occurs in response to amino acid starvation and UV irradiation. Phosphorylation at Ser-52 by EIF2AK1/HRI in response to mitochondrial damage promotes relocalization to the mitochondrial surface.

It localises to the cytoplasm. Its subcellular location is the stress granule. The protein localises to the cytosol. The protein resides in the mitochondrion. Its activity is regulated as follows. Activity is regulated by phosphorylation at Ser-49 and Ser-52, which stabilizes the eIF2/GDP/eIF2B complex and prevents the eIF2B-mediated exchange of GDP for GTP, thereby preventing the formation of the 43S pre-initiation complex (43S PIC). This results in the global attenuation of 5' cap-dependent protein synthesis and concomitant translation of ISR-specific mRNAs that contain a short upstream open reading frame (uORF) in their 5' UTR, such as ATF4, ATF5, DDIT3/CHOP and PPP1R15A/GADD34. In terms of biological role, member of the eIF2 complex that functions in the early steps of protein synthesis by forming a ternary complex with GTP and initiator tRNA. This complex binds to a 40S ribosomal subunit, followed by mRNA binding to form a 43S pre-initiation complex. Junction of the 60S ribosomal subunit to form the 80S initiation complex is preceded by hydrolysis of the GTP bound to eIF2 and release of an eIF2-GDP binary complex. In order for eIF2 to recycle and catalyze another round of initiation, the GDP bound to eIF2 must exchange with GTP by way of a reaction catalyzed by eIF2B. EIF2S1/eIF2-alpha is a key component of the integrated stress response (ISR), required for adaptation to various stress: phosphorylation by metabolic-stress sensing protein kinases (EIF2AK1/HRI, EIF2AK2/PKR, EIF2AK3/PERK and EIF2AK4/GCN2) in response to stress converts EIF2S1/eIF2-alpha in a global protein synthesis inhibitor, leading to a attenuation of cap-dependent translation, while concomitantly initiating the preferential translation of ISR-specific mRNAs, such as the transcriptional activators ATF4 and QRICH1, and hence allowing ATF4- and QRICH1-mediated reprogramming. EIF2S1/eIF2-alpha also acts as an activator of mitophagy in response to mitochondrial damage: phosphorylation by EIF2AK1/HRI promotes relocalization to the mitochondrial surface, thereby triggering PRKN-independent mitophagy. The polypeptide is Eukaryotic translation initiation factor 2 subunit 1 (EIF2S1) (Sus scrofa (Pig)).